Consider the following 121-residue polypeptide: Large ribosomal subunit protein uL3 (121 aa).

Gln-62 is modified (N5-methylglutamine).

Belongs to the universal ribosomal protein uL3 family. In terms of assembly, part of the 50S ribosomal subunit. Forms a cluster with proteins L14 and L19. Methylated by PrmB.

Functionally, one of the primary rRNA binding proteins, it binds directly near the 3'-end of the 23S rRNA, where it nucleates assembly of the 50S subunit. This is Large ribosomal subunit protein uL3 (rplC) from Aggregatibacter actinomycetemcomitans (Actinobacillus actinomycetemcomitans).